A 129-amino-acid polypeptide reads, in one-letter code: SOSS complex subunit C homolog (129 aa).

The interval 105 to 129 is disordered; that stretch reads RLEPLPSPATTPTTPNAPPSHSISK.

This sequence belongs to the SOSS-C family.

This is SOSS complex subunit C homolog from Drosophila simulans (Fruit fly).